Reading from the N-terminus, the 82-residue chain is MVTIRLSRGGAKKRPFYQIVVADSRCPRDGRFIERVGFFNPLAAGNAERLRIQLDRVNAWLEKGASLSDRVAALVKEAQKAA.

Belongs to the bacterial ribosomal protein bS16 family.

The chain is Small ribosomal subunit protein bS16 from Mannheimia succiniciproducens (strain KCTC 0769BP / MBEL55E).